The sequence spans 226 residues: Isoprenyl transferase (226 aa).

Residue Asp12 is part of the active site. Asp12 is a binding site for Mg(2+). Residues 13-16 (GNAR), Trp17, Lys25, His29, and 57-59 (SSE) each bind substrate. Catalysis depends on Asn60, which acts as the Proton acceptor. Substrate is bound by residues Trp61, Arg63, Arg174, and 180 to 182 (RIS). Glu193 is a Mg(2+) binding site.

Belongs to the UPP synthase family. As to quaternary structure, homodimer. The cofactor is Mg(2+).

Functionally, catalyzes the condensation of isopentenyl diphosphate (IPP) with allylic pyrophosphates generating different type of terpenoids. The sequence is that of Isoprenyl transferase from Rickettsia sibirica (strain ATCC VR-151 / 246).